The chain runs to 251 residues: Ubiquinone/menaquinone biosynthesis C-methyltransferase UbiE (251 aa).

S-adenosyl-L-methionine contacts are provided by residues Thr74, Asp95, and 123 to 124 (NA).

It belongs to the class I-like SAM-binding methyltransferase superfamily. MenG/UbiE family.

It catalyses the reaction a 2-demethylmenaquinol + S-adenosyl-L-methionine = a menaquinol + S-adenosyl-L-homocysteine + H(+). It carries out the reaction a 2-methoxy-6-(all-trans-polyprenyl)benzene-1,4-diol + S-adenosyl-L-methionine = a 5-methoxy-2-methyl-3-(all-trans-polyprenyl)benzene-1,4-diol + S-adenosyl-L-homocysteine + H(+). It participates in quinol/quinone metabolism; menaquinone biosynthesis; menaquinol from 1,4-dihydroxy-2-naphthoate: step 2/2. It functions in the pathway cofactor biosynthesis; ubiquinone biosynthesis. Its function is as follows. Methyltransferase required for the conversion of demethylmenaquinol (DMKH2) to menaquinol (MKH2) and the conversion of 2-polyprenyl-6-methoxy-1,4-benzoquinol (DDMQH2) to 2-polyprenyl-3-methyl-6-methoxy-1,4-benzoquinol (DMQH2). The chain is Ubiquinone/menaquinone biosynthesis C-methyltransferase UbiE from Shewanella halifaxensis (strain HAW-EB4).